We begin with the raw amino-acid sequence, 637 residues long: GTP-binding protein 4 (637 aa).

Ala2 is modified (N-acetylalanine). At Lys103 the chain carries N6-acetyllysine; alternate. Lys103 participates in a covalent cross-link: Glycyl lysine isopeptide (Lys-Gly) (interchain with G-Cter in SUMO2); alternate. Residue Ser122 is modified to Phosphoserine. An OBG-type G domain is found at 169–340 (RTLLLCGYPN…VKTEACDRLL (172 aa)). GTP-binding positions include 175 to 182 (GYPNVGKS), 221 to 225 (DTPGI), and 289 to 292 (SKCE). Residue Lys332 forms a Glycyl lysine isopeptide (Lys-Gly) (interchain with G-Cter in SUMO2) linkage. Disordered regions lie at residues 499-518 (SKEK…KVQR) and 525-637 (MRSL…KERR). Lys535 participates in a covalent cross-link: Glycyl lysine isopeptide (Lys-Gly) (interchain with G-Cter in SUMO2). The segment covering 542–555 (VRARRSRSVTRKRK) has biased composition (basic residues). Phosphoserine is present on Ser559. Residues 563 to 574 (SSIARSRSRSCS) are compositionally biased toward low complexity. Residues 576-588 (TPRDVSGLRDVKM) are compositionally biased toward basic and acidic residues. Residues 589 to 607 (VKKAKTMMKKAQKKMNRLG) show a composition bias toward basic residues. Basic and acidic residues predominate over residues 608-621 (KKGEADRHVFDMKP). A compositionally biased stretch (basic residues) spans 622–637 (KHLLSGKRKAGKKERR).

This sequence belongs to the TRAFAC class OBG-HflX-like GTPase superfamily. OBG GTPase family. NOG subfamily. In terms of assembly, associates with pre-60S ribosomal particles. Interacts with MINAS-60 (product of an alternative open reading frame of RBM10).

The protein localises to the nucleus. It is found in the nucleolus. In terms of biological role, involved in the biogenesis of the 60S ribosomal subunit. Acts as TP53 repressor, preventing TP53 stabilization and cell cycle arrest. The protein is GTP-binding protein 4 (Gtpbp4) of Rattus norvegicus (Rat).